Consider the following 133-residue polypeptide: Nickel-responsive regulator (133 aa).

Residues H76, H87, H89, and C95 each coordinate Ni(2+).

Belongs to the transcriptional regulatory CopG/NikR family. In terms of assembly, homotetramer. It depends on Ni(2+) as a cofactor.

Its function is as follows. Transcriptional repressor of the nikABCDE operon. Is active in the presence of excessive concentrations of intracellular nickel. The sequence is that of Nickel-responsive regulator from Escherichia coli O6:K15:H31 (strain 536 / UPEC).